The sequence spans 130 residues: Fumarate reductase subunit D (130 aa).

3 helical membrane-spanning segments follow: residues 35–55, 67–87, and 110–130; these read FAMI…LGVI, SFAT…LPMW, and IACY…IFMI.

This sequence belongs to the FrdD family. In terms of assembly, part of an enzyme complex containing four subunits: a flavoprotein (FrdA), an iron-sulfur protein (FrdB), and two hydrophobic anchor proteins (FrdC and FrdD).

It localises to the cell inner membrane. In terms of biological role, anchors the catalytic components of the fumarate reductase complex to the cell membrane, binds quinones. In Vibrio cholerae serotype O1 (strain M66-2), this protein is Fumarate reductase subunit D.